Consider the following 333-residue polypeptide: Glycerol-3-phosphate dehydrogenase [NAD(P)+] (333 aa).

4 residues coordinate NADPH: Ser-13, Tyr-14, Arg-34, and Lys-108. Lys-108, Gly-137, and Thr-139 together coordinate sn-glycerol 3-phosphate. Ala-141 lines the NADPH pocket. Residues Lys-193, Asp-246, Ser-256, Arg-257, and Asn-258 each contribute to the sn-glycerol 3-phosphate site. Lys-193 (proton acceptor) is an active-site residue. Arg-257 contributes to the NADPH binding site. Position 283 (Glu-283) interacts with NADPH.

Belongs to the NAD-dependent glycerol-3-phosphate dehydrogenase family.

The protein localises to the cytoplasm. The catalysed reaction is sn-glycerol 3-phosphate + NAD(+) = dihydroxyacetone phosphate + NADH + H(+). It catalyses the reaction sn-glycerol 3-phosphate + NADP(+) = dihydroxyacetone phosphate + NADPH + H(+). It participates in membrane lipid metabolism; glycerophospholipid metabolism. Catalyzes the reduction of the glycolytic intermediate dihydroxyacetone phosphate (DHAP) to sn-glycerol 3-phosphate (G3P), the key precursor for phospholipid synthesis. This Idiomarina loihiensis (strain ATCC BAA-735 / DSM 15497 / L2-TR) protein is Glycerol-3-phosphate dehydrogenase [NAD(P)+].